Consider the following 549-residue polypeptide: DNA polymerase lambda (549 aa).

Residues 17-116 (DPDGMFRGVS…ERLPEHKFAI (100 aa)) enclose the BRCT domain. The tract at residues 126–197 (KEGGAAGSGV…ASGDSKETIA (72 aa)) is disordered. Basic and acidic residues predominate over residues 149–175 (PENRKETAGGNRESRDAIAHPNEDSDV). Residues 180 to 197 (STCTSSQSASGDSKETIA) show a composition bias toward polar residues. Positions 233–247 (NIYRALGDDRRSFSY) are DNA-binding. His280 is an active-site residue. The segment at 315 to 318 (GPAT) is DNA-binding. DCTP-binding positions include Arg356, 387–390 (SYRR), and 396–399 (GDMD). An involved in primer binding region spans residues 390 to 399 (RGKSSCGDMD). Mn(2+) is bound by residues Asp397, Asp399, and Asp464. Positions 438-479 (IEGTDCGVDTYFGLCTYPGRELRHRIDLKVYPRNRHAFGLLA) are DNA-binding. Asn487 is a dCTP binding site.

This sequence belongs to the DNA polymerase type-X family. In terms of assembly, interacts with PCNA. Mn(2+) serves as cofactor. As to expression, expressed in proliferating tissues. Expressed in roots, root apex, young leaves, shoot apical meristem (SAM), flag leaves and panicles.

It localises to the nucleus. The catalysed reaction is DNA(n) + a 2'-deoxyribonucleoside 5'-triphosphate = DNA(n+1) + diphosphate. In terms of biological role, repair polymerase involved in base excision repair (BER) and responsible for repair of lesions that give rise to abasic (AP) sites in DNA. Has both DNA polymerase and terminal transferase activities. Has a 5'-deoxyribose-5-phosphate lyase (dRP lyase) activity. This Oryza sativa subsp. japonica (Rice) protein is DNA polymerase lambda.